The sequence spans 428 residues: Chaperone SurA (428 aa).

Residues M1–S19 form the signal peptide. PpiC domains lie at S170–D268 and V277–D377.

The protein localises to the periplasm. The catalysed reaction is [protein]-peptidylproline (omega=180) = [protein]-peptidylproline (omega=0). Functionally, chaperone involved in the correct folding and assembly of outer membrane proteins. Recognizes specific patterns of aromatic residues and the orientation of their side chains, which are found more frequently in integral outer membrane proteins. May act in both early periplasmic and late outer membrane-associated steps of protein maturation. The sequence is that of Chaperone SurA from Vibrio vulnificus (strain YJ016).